The sequence spans 929 residues: Pyruvate dehydrogenase E1 component (929 aa).

Lys-375 is covalently cross-linked (Isoglutamyl lysine isopeptide (Lys-Gln) (interchain with Q-Cter in protein Pup)).

As to quaternary structure, homodimer. Part of the PDH complex, consisting of multiple copies of AceE (E1), DlaT (E2) and Lpd (E3). It depends on Mg(2+) as a cofactor. Thiamine diphosphate is required as a cofactor.

The catalysed reaction is N(6)-[(R)-lipoyl]-L-lysyl-[protein] + pyruvate + H(+) = N(6)-[(R)-S(8)-acetyldihydrolipoyl]-L-lysyl-[protein] + CO2. In terms of biological role, component of the pyruvate dehydrogenase (PDH) complex, that catalyzes the overall conversion of pyruvate to acetyl-CoA and CO(2). AceE has reductase activity with pyruvate but does not react with 2-oxoglutarate. The chain is Pyruvate dehydrogenase E1 component (aceE) from Mycolicibacterium smegmatis (strain ATCC 700084 / mc(2)155) (Mycobacterium smegmatis).